Here is a 113-residue protein sequence, read N- to C-terminus: Large ribosomal subunit protein uL22 (113 aa).

It belongs to the universal ribosomal protein uL22 family. Part of the 50S ribosomal subunit.

Its function is as follows. This protein binds specifically to 23S rRNA; its binding is stimulated by other ribosomal proteins, e.g. L4, L17, and L20. It is important during the early stages of 50S assembly. It makes multiple contacts with different domains of the 23S rRNA in the assembled 50S subunit and ribosome. Functionally, the globular domain of the protein is located near the polypeptide exit tunnel on the outside of the subunit, while an extended beta-hairpin is found that lines the wall of the exit tunnel in the center of the 70S ribosome. This is Large ribosomal subunit protein uL22 from Herpetosiphon aurantiacus (strain ATCC 23779 / DSM 785 / 114-95).